A 199-amino-acid chain; its full sequence is MTTLFDILNTLNNNNNNNNYTGCKRQYSINKRVDIIPSMDVTLTNDKLIIETELTGVSKNDIDINIKDSILIIQGEKKKSIIKNQQQQQQQQQLENSNNKENDEPSIEEFEEDVKSKSELNKTTLNTTENKDEDKTTQNINKEFISERSFGNFKRYLNLSEILYQLDLNSIDTQFENGLLTITIKKKFDSSNTIKININ.

The sHSP domain maps to 30–199 (NKRVDIIPSM…SSNTIKININ (170 aa)). The interval 83-105 (KNQQQQQQQQQLENSNNKENDEP) is disordered.

Belongs to the small heat shock protein (HSP20) family.

The polypeptide is Small heat shock protein hspG4 (hspG4) (Dictyostelium discoideum (Social amoeba)).